The following is a 396-amino-acid chain: L-lactate dehydrogenase (396 aa).

The FMN hydroxy acid dehydrogenase domain maps to 1–380 (MIISAASDYR…SGDSLVQELG (380 aa)). Position 24 (Tyr24) interacts with substrate. Residues Ser106 and Gln127 each contribute to the FMN site. Tyr129 contributes to the substrate binding site. Residue Thr155 coordinates FMN. A substrate-binding site is contributed by Arg164. Lys251 serves as a coordination point for FMN. The active-site Proton acceptor is His275. Arg278 contributes to the substrate binding site. 306–330 (DSGIRNGLDVVRMIALGADTVLLGR) is a binding site for FMN.

This sequence belongs to the FMN-dependent alpha-hydroxy acid dehydrogenase family. It depends on FMN as a cofactor.

It localises to the cell inner membrane. The catalysed reaction is (S)-lactate + A = pyruvate + AH2. Its function is as follows. Catalyzes the conversion of L-lactate to pyruvate. Is coupled to the respiratory chain. In Salmonella newport (strain SL254), this protein is L-lactate dehydrogenase.